A 162-amino-acid chain; its full sequence is uncharacterized protein (162 aa).

Positions 1–34 are cleaved as a signal peptide; that stretch reads MAREVISTSILMIATVVAVTAAIMVILPAVKDLA.

This is an uncharacterized protein from Archaeoglobus fulgidus (strain ATCC 49558 / DSM 4304 / JCM 9628 / NBRC 100126 / VC-16).